A 406-amino-acid chain; its full sequence is Protease ElaD (406 aa).

Residue H234 is part of the active site. C316 (nucleophile) is an active-site residue.

This sequence belongs to the peptidase C79 family.

Its function is as follows. Protease that can act as an efficient and specific deubiquitinating enzyme in vitro. Does not possess desumoylating and deneddylating activities. The physiological substrate is unknown. The chain is Protease ElaD (elaD) from Escherichia coli O139:H28 (strain E24377A / ETEC).